A 147-amino-acid chain; its full sequence is 3-dehydroquinate dehydratase (147 aa).

Residue tyrosine 23 is the Proton acceptor of the active site. Substrate contacts are provided by asparagine 74, histidine 80, and aspartate 87. Histidine 100 acts as the Proton donor in catalysis. Residues 101 to 102 (IS) and arginine 111 each bind substrate.

Belongs to the type-II 3-dehydroquinase family. As to quaternary structure, homododecamer.

The enzyme catalyses 3-dehydroquinate = 3-dehydroshikimate + H2O. Its pathway is metabolic intermediate biosynthesis; chorismate biosynthesis; chorismate from D-erythrose 4-phosphate and phosphoenolpyruvate: step 3/7. In terms of biological role, catalyzes a trans-dehydration via an enolate intermediate. In Prochlorococcus marinus (strain MIT 9215), this protein is 3-dehydroquinate dehydratase.